The following is a 514-amino-acid chain: Mitochondrial-processing peptidase subunit alpha (514 aa).

The transit peptide at 1–55 directs the protein to the mitochondrion; the sequence is MLLRKSIPYIKICRDISASVRNNKEIAQKLPLSVPLPMENNSKSIEKGCPPMGRN.

The protein belongs to the peptidase M16 family. As to quaternary structure, heterodimer of mppa-1 (alpha) and mppb-1 (beta) subunits, forming the mitochondrial processing protease (MPP) in which mppa-1 is involved in substrate recognition and binding and mppb-1 is the catalytic subunit.

Its subcellular location is the mitochondrion matrix. Its function is as follows. Substrate recognition and binding subunit of the essential mitochondrial processing protease (MPP), which cleaves the mitochondrial sequence off newly imported precursors proteins. This Caenorhabditis elegans protein is Mitochondrial-processing peptidase subunit alpha.